The primary structure comprises 118 residues: Ribonuclease P protein component (118 aa).

It belongs to the RnpA family. In terms of assembly, consists of a catalytic RNA component (M1 or rnpB) and a protein subunit.

The enzyme catalyses Endonucleolytic cleavage of RNA, removing 5'-extranucleotides from tRNA precursor.. In terms of biological role, RNaseP catalyzes the removal of the 5'-leader sequence from pre-tRNA to produce the mature 5'-terminus. It can also cleave other RNA substrates such as 4.5S RNA. The protein component plays an auxiliary but essential role in vivo by binding to the 5'-leader sequence and broadening the substrate specificity of the ribozyme. The sequence is that of Ribonuclease P protein component from Rickettsia rickettsii (strain Iowa).